The chain runs to 373 residues: 3 beta-hydroxysteroid dehydrogenase/Delta 5--&gt;4-isomerase type 2 (373 aa).

The active-site Proton acceptor is tyrosine 155. An NAD(+)-binding site is contributed by lysine 159. The chain crosses the membrane as a helical span at residues 288 to 308 (LPLLYWLAFLLETVSFLLRPF).

The protein belongs to the 3-beta-HSD family. In terms of tissue distribution, adrenal glands, testes and ovaries.

Its subcellular location is the endoplasmic reticulum membrane. The protein localises to the mitochondrion membrane. It carries out the reaction a 3beta-hydroxy-Delta(5)-steroid + NAD(+) = a 3-oxo-Delta(5)-steroid + NADH + H(+). The enzyme catalyses a 3-oxo-Delta(5)-steroid = a 3-oxo-Delta(4)-steroid. It participates in lipid metabolism; steroid biosynthesis. Functionally, 3-beta-HSD is a bifunctional enzyme, that catalyzes the oxidative conversion of Delta(5)-ene-3-beta-hydroxy steroid, and the oxidative conversion of ketosteroids. The 3-beta-HSD enzymatic system plays a crucial role in the biosynthesis of all classes of hormonal steroids. The protein is 3 beta-hydroxysteroid dehydrogenase/Delta 5--&gt;4-isomerase type 2 (Hsd3b) of Rattus norvegicus (Rat).